The chain runs to 1338 residues: Aldehyde oxidase 1 (1338 aa).

The 2Fe-2S ferredoxin-type domain maps to 5-92 (SELLFYVNGR…GTAVTTVEGI (88 aa)). Residues Q113 and C151 each coordinate Mo-molybdopterin. In terms of domain architecture, FAD-binding PCMH-type spans 236–421 (FGSERMMWFS…VSVNIPYSRK (186 aa)). Residues 264-271 (VIMGNTSV), A345, S354, H358, D367, and L411 contribute to the FAD site. Mo-molybdopterin contacts are provided by residues 806–807 (AF) and M1047. S1068 carries the phosphoserine modification. Mo-molybdopterin is bound by residues 1088–1091 (GSVV), Q1203, and L1268. The active-site Proton acceptor; for azaheterocycle hydroxylase activity is the E1270.

It belongs to the xanthine dehydrogenase family. Homodimer. It depends on [2Fe-2S] cluster as a cofactor. FAD is required as a cofactor. The cofactor is Mo-molybdopterin. In terms of tissue distribution, detected at high levels in liver, also detected in lung, kidney, lacrimal gland and olfactory mucosa.

It localises to the cytoplasm. It carries out the reaction an aldehyde + O2 + H2O = a carboxylate + H2O2 + H(+). The catalysed reaction is retinal + O2 + H2O = retinoate + H2O2 + H(+). In terms of biological role, oxidase with broad substrate specificity, oxidizing aromatic azaheterocycles, such as N1-methylnicotinamide, N-methylphthalazinium and phthalazine, as well as aldehydes, such as benzaldehyde, retinal, pyridoxal, and vanillin. Plays a key role in the metabolism of xenobiotics and drugs containing aromatic azaheterocyclic substituents. Participates in the bioactivation of prodrugs such as famciclovir, catalyzing the oxidation step from 6-deoxypenciclovir to penciclovir, which is a potent antiviral agent. Is probably involved in the regulation of reactive oxygen species homeostasis. May be a prominent source of superoxide generation via the one-electron reduction of molecular oxygen. May also catalyze nitric oxide (NO) production via the reduction of nitrite to NO with NADH or aldehyde as electron donor. May play a role in adipogenesis. This chain is Aldehyde oxidase 1 (AOX1), found in Macaca fascicularis (Crab-eating macaque).